The following is a 605-amino-acid chain: DNA mismatch repair protein MutL (605 aa).

The protein belongs to the DNA mismatch repair MutL/HexB family.

Its function is as follows. This protein is involved in the repair of mismatches in DNA. It is required for dam-dependent methyl-directed DNA mismatch repair. May act as a 'molecular matchmaker', a protein that promotes the formation of a stable complex between two or more DNA-binding proteins in an ATP-dependent manner without itself being part of a final effector complex. The sequence is that of DNA mismatch repair protein MutL from Pelotomaculum thermopropionicum (strain DSM 13744 / JCM 10971 / SI).